The following is a 432-amino-acid chain: Enolase (432 aa).

Glutamine 163 contacts (2R)-2-phosphoglycerate. The active-site Proton donor is the glutamate 205. Residues aspartate 242, glutamate 288, and aspartate 315 each coordinate Mg(2+). Residues lysine 340, arginine 369, serine 370, and lysine 391 each contribute to the (2R)-2-phosphoglycerate site. Catalysis depends on lysine 340, which acts as the Proton acceptor.

This sequence belongs to the enolase family. Homodimer. The cofactor is Mg(2+).

The protein localises to the cytoplasm. It localises to the secreted. The protein resides in the cell surface. It catalyses the reaction (2R)-2-phosphoglycerate = phosphoenolpyruvate + H2O. It functions in the pathway carbohydrate degradation; glycolysis; pyruvate from D-glyceraldehyde 3-phosphate: step 4/5. Its activity is regulated as follows. The covalent binding to the substrate causes inactivation of the enzyme, and possibly serves as a signal for the export of the protein. Catalyzes the reversible conversion of 2-phosphoglycerate (2-PG) into phosphoenolpyruvate (PEP). It is essential for the degradation of carbohydrates via glycolysis. The sequence is that of Enolase from Enterococcus hirae.